The sequence spans 152 residues: Ribonuclease H (152 aa).

One can recognise an RNase H type-1 domain in the interval 1–142; sequence MKEVTIYTDG…CDELARAAIA (142 aa). Mg(2+) contacts are provided by Asp9, Glu47, Asp69, and Asp134.

The protein belongs to the RNase H family. In terms of assembly, monomer. Mg(2+) is required as a cofactor.

The protein localises to the cytoplasm. The enzyme catalyses Endonucleolytic cleavage to 5'-phosphomonoester.. In terms of biological role, endonuclease that specifically degrades the RNA of RNA-DNA hybrids. In Moorella thermoacetica (strain ATCC 39073 / JCM 9320), this protein is Ribonuclease H.